The primary structure comprises 77 residues: Small integral membrane protein 5 (77 aa).

Residues 32-52 (IVAFSVIILFTATVLLLLLIA) form a helical membrane-spanning segment.

It is found in the membrane. The polypeptide is Small integral membrane protein 5 (SMIM5) (Homo sapiens (Human)).